A 345-amino-acid polypeptide reads, in one-letter code: Putative [LysW]-L-2-aminoadipate/[LysW]-L-glutamate phosphate reductase (345 aa).

Serine 11–threonine 14 provides a ligand contact to NADP(+). Residues threonine 34–arginine 56 form a disordered region. Cysteine 146 is an active-site residue. Asparagine 309 is a binding site for NADP(+).

It belongs to the NAGSA dehydrogenase family. Type 1 subfamily. LysY sub-subfamily.

The protein localises to the cytoplasm. It catalyses the reaction [amino-group carrier protein]-C-terminal-N-(1-carboxy-5-oxopentan-1-yl)-L-glutamine + phosphate + NADP(+) = [amino-group carrier protein]-C-terminal-N-(1-carboxy-5-phosphooxy-5-oxopentan-1-yl)-L-glutamine + NADPH + H(+). It carries out the reaction [amino-group carrier protein]-C-terminal-gamma-(L-glutamyl-5-semialdehyde)-L-glutamate + phosphate + NADP(+) = [amino-group carrier protein]-C-terminal-gamma-(5-phospho-L-glutamyl)-L-glutamate + NADPH + H(+). Its pathway is amino-acid biosynthesis; L-lysine biosynthesis via AAA pathway; L-lysine from L-alpha-aminoadipate (Thermus route): step 3/5. The protein operates within amino-acid biosynthesis; L-arginine biosynthesis. Its function is as follows. Involved in both the arginine and lysine biosynthetic pathways. The polypeptide is Putative [LysW]-L-2-aminoadipate/[LysW]-L-glutamate phosphate reductase (Haloarcula marismortui (strain ATCC 43049 / DSM 3752 / JCM 8966 / VKM B-1809) (Halobacterium marismortui)).